The chain runs to 374 residues: Arrestin domain-containing protein 15 (374 aa).

The interval 344-374 (HHLNRSKAKVSKTEQQQRKTRNIVEENPYFR) is disordered.

It belongs to the arrestin family.

The sequence is that of Arrestin domain-containing protein 15 (arrd-15) from Caenorhabditis elegans.